We begin with the raw amino-acid sequence, 47 residues long: Light-harvesting protein B800/850/890 alpha-2 chain (47 aa).

The Cytoplasmic segment spans residues 1 to 12 (MWRMWKILDYRR). Residues 13–33 (TVVLAHVGMAVLALLIHFILL) form a helical membrane-spanning segment. A bacteriochlorophyll is bound at residue H29. The Periplasmic portion of the chain corresponds to 34-47 (STESFNWLEGNPYG).

This sequence belongs to the antenna complex alpha subunit family. The core complex is formed by different alpha and beta chains, binding bacteriochlorophyll molecules, and arranged most probably in tetrameric structures disposed around the reaction center. The non-pigmented gamma chains may constitute additional components.

It localises to the cell inner membrane. Its function is as follows. Antenna complexes are light-harvesting systems, which transfer the excitation energy to the reaction centers. The protein is Light-harvesting protein B800/850/890 alpha-2 chain of Halorhodospira halophila (strain DSM 244 / SL1) (Ectothiorhodospira halophila (strain DSM 244 / SL1)).